Here is a 569-residue protein sequence, read N- to C-terminus: MARILITSALPYINGIKHLGNLAGSMLPADVYARFKRAQGHETLYICATDEHGTPAELAAAAAGQDVATYCAEQHVLQHEVGRAFGLSWDHFGRSSSPQNHRLTQHFCQALEDHGLIEERVDQMVYSVDDKRFLPDRYVEGTCPHCKFEKARGDQCDNCGNLLDPTDLIDPYSVISGSRNIEVRDTKHLYLLQTKMQDKIRAWVDAHADWPPLARSIAYKHLDEGLIDRGITRDLAWGIPVAQDGVPRPGFEEKVFYVWFDAPIEYIAATQEWAEGSPDRDWKRWWRTDAGADDVRYVQFMGKDNVAFHTVSFPATILGSEEPWKSVDMLKAFNWLNWYGGKFSTSNKRGVFMDAALEILPPDLWRWYLTANSPEGSDTAFTWEQFASAVNRDLADVLGNFVNRILKFNESKFEGVVPAGGEPGPLEEKLFADVSARLADLAEQMDAIEIRKSAQALRALWVVGNEYLQEAAPWTAIKTDRDRAAVIVRTALNLAALYAKISAPFIPFAAEKIGDAFGLDFPASWPSNDAKAELNTLSVGRPITVPEVLFKKIEDEQIAEWTARFGGAE.

The 'HIGH' region motif lies at 11-21 (PYINGIKHLGN). Zn(2+) is bound by residues Cys-143, Cys-146, Cys-156, and Cys-159. Residues 342-346 (KFSTS) carry the 'KMSKS' region motif. Thr-345 provides a ligand contact to ATP.

The protein belongs to the class-I aminoacyl-tRNA synthetase family. MetG type 1 subfamily. As to quaternary structure, monomer. Zn(2+) serves as cofactor.

It is found in the cytoplasm. The catalysed reaction is tRNA(Met) + L-methionine + ATP = L-methionyl-tRNA(Met) + AMP + diphosphate. Functionally, is required not only for elongation of protein synthesis but also for the initiation of all mRNA translation through initiator tRNA(fMet) aminoacylation. In Caulobacter vibrioides (strain ATCC 19089 / CIP 103742 / CB 15) (Caulobacter crescentus), this protein is Methionine--tRNA ligase.